The primary structure comprises 129 residues: Small ribosomal subunit protein uS11 (129 aa).

This sequence belongs to the universal ribosomal protein uS11 family. Part of the 30S ribosomal subunit. Interacts with proteins S7 and S18. Binds to IF-3.

Functionally, located on the platform of the 30S subunit, it bridges several disparate RNA helices of the 16S rRNA. Forms part of the Shine-Dalgarno cleft in the 70S ribosome. This chain is Small ribosomal subunit protein uS11, found in Methylocella silvestris (strain DSM 15510 / CIP 108128 / LMG 27833 / NCIMB 13906 / BL2).